A 345-amino-acid chain; its full sequence is Heat-inducible transcription repressor HrcA (345 aa).

Belongs to the HrcA family.

Its function is as follows. Negative regulator of class I heat shock genes (grpE-dnaK-dnaJ and groELS operons). Prevents heat-shock induction of these operons. This chain is Heat-inducible transcription repressor HrcA, found in Corynebacterium diphtheriae (strain ATCC 700971 / NCTC 13129 / Biotype gravis).